Reading from the N-terminus, the 680-residue chain is Harmonin-binding protein USHBP1 (680 aa).

Residues 1–15 (MSARATRPRSRRGRH) are compositionally biased toward basic residues. 3 disordered regions span residues 1-101 (MSAR…GPAE), 135-162 (PVEA…GQQE), and 217-250 (ASPP…DSPM). Residues 76 to 86 (PEERREPEVEA) are compositionally biased toward basic and acidic residues. Coiled coils occupy residues 177-219 (LGTR…EASP), 362-386 (ATNG…VAMD), and 479-506 (LADL…LRAQ). Positions 524–562 (LMGDGSSGGSSEDPSSEEEAGEDRQQHYQGPPALLGGQM) are disordered. A coiled-coil region spans residues 573-661 (QELSASLTRA…QQAEELAVLT (89 aa)).

The protein belongs to the MCC family. Interacts via its C-terminus with the first PDZ domain of USH1C.

The polypeptide is Harmonin-binding protein USHBP1 (Rattus norvegicus (Rat)).